The sequence spans 645 residues: Cysteine-rich receptor-like protein kinase 19 (645 aa).

Positions 1-20 (MSSLISFIFLFLFSSITASA) are cleaved as a signal peptide. Topologically, residues 21–262 (QNTFYLYHNC…PRPGKGGNSS (242 aa)) are extracellular. 2 Gnk2-homologous domains span residues 24 to 129 (FYLY…NRNI) and 135 to 239 (TDGG…NYAF). Residues asparagine 29, asparagine 39, asparagine 57, asparagine 101, asparagine 185, asparagine 241, and asparagine 260 are each glycosylated (N-linked (GlcNAc...) asparagine). Residues 263–283 (VIIIAVVVPITVLFLLLVAVF) traverse the membrane as a helical segment. At 284–645 (SVRAKNKRTL…EASITRVTPR (362 aa)) the chain is on the cytoplasmic side. In terms of domain architecture, Protein kinase spans 326 to 603 (FLPINKLGQG…IVQMLTTSLI (278 aa)). Residues 332–340 (LGQGGFGEV) and lysine 354 each bind ATP. Tyrosine 399 carries the post-translational modification Phosphotyrosine. Aspartate 451 functions as the Proton acceptor in the catalytic mechanism. Threonine 491 carries the post-translational modification Phosphothreonine. Tyrosine 499 carries the post-translational modification Phosphotyrosine. A disordered region spans residues 616 to 645 (RSKQEQAGPSIDSSTHCSVDEASITRVTPR). The segment covering 620-632 (EQAGPSIDSSTHC) has biased composition (polar residues).

This sequence belongs to the protein kinase superfamily. Ser/Thr protein kinase family. CRK subfamily. As to quaternary structure, interacts with MWL1.

It localises to the membrane. It carries out the reaction L-seryl-[protein] + ATP = O-phospho-L-seryl-[protein] + ADP + H(+). The catalysed reaction is L-threonyl-[protein] + ATP = O-phospho-L-threonyl-[protein] + ADP + H(+). This chain is Cysteine-rich receptor-like protein kinase 19 (CRK19), found in Arabidopsis thaliana (Mouse-ear cress).